We begin with the raw amino-acid sequence, 179 residues long: Large ribosomal subunit protein uL6 (179 aa).

Positions 154 to 169 (EPYKGKGVKYEHEQIR) are enriched in basic and acidic residues. Residues 154–179 (EPYKGKGVKYEHEQIRRKAGKSGGKK) are disordered. A compositionally biased stretch (basic residues) spans 170 to 179 (RKAGKSGGKK).

It belongs to the universal ribosomal protein uL6 family. In terms of assembly, part of the 50S ribosomal subunit.

Its function is as follows. This protein binds to the 23S rRNA, and is important in its secondary structure. It is located near the subunit interface in the base of the L7/L12 stalk, and near the tRNA binding site of the peptidyltransferase center. The polypeptide is Large ribosomal subunit protein uL6 (Oleidesulfovibrio alaskensis (strain ATCC BAA-1058 / DSM 17464 / G20) (Desulfovibrio alaskensis)).